The following is a 94-amino-acid chain: Ubiquitin-like protein ATG12B (94 aa).

Alanine 2 carries the N-acetylalanine modification. Residue glycine 94 forms a Glycyl lysine isopeptide (Gly-Lys) (interchain with K-128 in ATG5) linkage.

Belongs to the ATG12 family. Ubiquitous.

The protein resides in the cytoplasm. In terms of biological role, ubiquitin-like protein involved in cytoplasm to vacuole transport (Cvt) and autophagy vesicles formation. Conjugation with ATG5 through a ubiquitin-like conjugating system involving also ATG7 as an E1-like activating enzyme and ATG10 as an E2-like conjugating enzyme, is essential for its function. ATG12/ATG5 conjugate has an essential role in plant nutrient recycling. The chain is Ubiquitin-like protein ATG12B (ATG12B) from Arabidopsis thaliana (Mouse-ear cress).